The primary structure comprises 164 residues: Putative deoxyuridine 5'-triphosphate nucleotidohydrolase (164 aa).

A substrate-binding site is contributed by 65–67 (RSG). Lysine 71 bears the N6-acetyllysine; by host mark. Residues 79-82 (GVVD), glycine 90, and 138-139 (YG) contribute to the substrate site.

The protein belongs to the dUTPase family. It depends on Mg(2+) as a cofactor.

The catalysed reaction is dUTP + H2O = dUMP + diphosphate + H(+). Its function is as follows. This enzyme is involved in nucleotide metabolism: it produces dUMP, the immediate precursor of thymidine nucleotides and it decreases the intracellular concentration of dUTP so that uracil cannot be incorporated into DNA. The chain is Putative deoxyuridine 5'-triphosphate nucleotidohydrolase from Dryophytes versicolor (chameleon treefrog).